The sequence spans 91 residues: MGLEDEQRMLTGSGDPKEEEEEEEELVDPLTTVREQCEQLEKCVKARERLELCDERVSSRSQTEEDCTEELLDFLHARDHCVAHKLFNSLK.

A mitochondrion-targeting transit peptide spans 1-13 (MGLEDEQRMLTGS). Positions 1-30 (MGLEDEQRMLTGSGDPKEEEEEEEELVDPL) are disordered. Residues 17-27 (KEEEEEEEELV) are compositionally biased toward acidic residues. Disulfide bonds link Cys-37–Cys-81 and Cys-53–Cys-67. Lys-42 carries the post-translational modification N6-acetyllysine. Lys-85 bears the N6-acetyllysine mark.

This sequence belongs to the UQCRH/QCR6 family. Component of the ubiquinol-cytochrome c oxidoreductase (cytochrome b-c1 complex, complex III, CIII), a multisubunit enzyme composed of 11 subunits. The complex is composed of 3 respiratory subunits cytochrome b, cytochrome c1 and Rieske protein UQCRFS1, 2 core protein subunits UQCRC1/QCR1 and UQCRC2/QCR2, and 6 low-molecular weight protein subunits UQCRH/QCR6, UQCRB/QCR7, UQCRQ/QCR8, UQCR10/QCR9, UQCR11/QCR10 and subunit 9, the cleavage product of Rieske protein UQCRFS1. The complex exists as an obligatory dimer and forms supercomplexes (SCs) in the inner mitochondrial membrane with NADH-ubiquinone oxidoreductase (complex I, CI) and cytochrome c oxidase (complex IV, CIV), resulting in different assemblies (supercomplex SCI(1)III(2)IV(1) and megacomplex MCI(2)III(2)IV(2)).

Its subcellular location is the mitochondrion inner membrane. Its function is as follows. Component of the ubiquinol-cytochrome c oxidoreductase, a multisubunit transmembrane complex that is part of the mitochondrial electron transport chain which drives oxidative phosphorylation. The respiratory chain contains 3 multisubunit complexes succinate dehydrogenase (complex II, CII), ubiquinol-cytochrome c oxidoreductase (cytochrome b-c1 complex, complex III, CIII) and cytochrome c oxidase (complex IV, CIV), that cooperate to transfer electrons derived from NADH and succinate to molecular oxygen, creating an electrochemical gradient over the inner membrane that drives transmembrane transport and the ATP synthase. The cytochrome b-c1 complex catalyzes electron transfer from ubiquinol to cytochrome c, linking this redox reaction to translocation of protons across the mitochondrial inner membrane, with protons being carried across the membrane as hydrogens on the quinol. In the process called Q cycle, 2 protons are consumed from the matrix, 4 protons are released into the intermembrane space and 2 electrons are passed to cytochrome c. This is Cytochrome b-c1 complex subunit 6, mitochondrial (UQCRH) from Bos taurus (Bovine).